A 338-amino-acid chain; its full sequence is Lipoate-protein ligase A (338 aa).

The region spanning 29 to 216 is the BPL/LPL catalytic domain; sequence PATQRVLFLW…AFFAYYGERV (188 aa). ATP-binding positions include Arg71, 76 to 79, and Lys134; that span reads GAVF. Lys134 is a binding site for (R)-lipoate.

It belongs to the LplA family. As to quaternary structure, monomer.

It is found in the cytoplasm. It catalyses the reaction L-lysyl-[lipoyl-carrier protein] + (R)-lipoate + ATP = N(6)-[(R)-lipoyl]-L-lysyl-[lipoyl-carrier protein] + AMP + diphosphate + H(+). Its pathway is protein modification; protein lipoylation via exogenous pathway; protein N(6)-(lipoyl)lysine from lipoate: step 1/2. It participates in protein modification; protein lipoylation via exogenous pathway; protein N(6)-(lipoyl)lysine from lipoate: step 2/2. In terms of biological role, catalyzes both the ATP-dependent activation of exogenously supplied lipoate to lipoyl-AMP and the transfer of the activated lipoyl onto the lipoyl domains of lipoate-dependent enzymes. In Cronobacter sakazakii (strain ATCC BAA-894) (Enterobacter sakazakii), this protein is Lipoate-protein ligase A.